The chain runs to 946 residues: Protein translocase subunit SecA (946 aa).

Residues Q90, 108–112 (GEGKT), and D509 contribute to the ATP site.

Belongs to the SecA family. Monomer and homodimer. Part of the essential Sec protein translocation apparatus which comprises SecA, SecYEG and auxiliary proteins SecDF. Other proteins may also be involved.

It localises to the cell inner membrane. The protein resides in the cellular thylakoid membrane. The protein localises to the cytoplasm. The catalysed reaction is ATP + H2O + cellular proteinSide 1 = ADP + phosphate + cellular proteinSide 2.. Its function is as follows. Part of the Sec protein translocase complex. Interacts with the SecYEG preprotein conducting channel. Has a central role in coupling the hydrolysis of ATP to the transfer of proteins into and across the cell membrane, serving as an ATP-driven molecular motor driving the stepwise translocation of polypeptide chains across the membrane. Probably participates in protein translocation into and across both the cytoplasmic and thylakoid membranes in cyanobacterial cells. The polypeptide is Protein translocase subunit SecA (Synechococcus sp. (strain RCC307)).